A 152-amino-acid polypeptide reads, in one-letter code: Superoxide dismutase [Cu-Zn] (152 aa).

H45, H47, and H62 together coordinate Cu cation. The cysteines at positions 56 and 145 are disulfide-linked. Zn(2+)-binding residues include H62, H70, H79, and D82. H119 lines the Cu cation pocket.

The protein belongs to the Cu-Zn superoxide dismutase family. As to quaternary structure, homodimer. Requires Cu cation as cofactor. Zn(2+) serves as cofactor.

The protein localises to the cytoplasm. The catalysed reaction is 2 superoxide + 2 H(+) = H2O2 + O2. Its function is as follows. Destroys radicals which are normally produced within the cells and which are toxic to biological systems. The sequence is that of Superoxide dismutase [Cu-Zn] (SODCC) from Zantedeschia aethiopica (White calla lily).